The sequence spans 209 residues: Large ribosomal subunit protein uL3 (209 aa).

The segment at 130–154 is disordered; sequence RGPMSHGSKFHRAVGSMGASSDPSR.

This sequence belongs to the universal ribosomal protein uL3 family. Part of the 50S ribosomal subunit. Forms a cluster with proteins L14 and L19.

Functionally, one of the primary rRNA binding proteins, it binds directly near the 3'-end of the 23S rRNA, where it nucleates assembly of the 50S subunit. The chain is Large ribosomal subunit protein uL3 from Clostridium kluyveri (strain NBRC 12016).